The sequence spans 396 residues: L-lactate dehydrogenase (396 aa).

One can recognise an FMN hydroxy acid dehydrogenase domain in the interval 1–380; that stretch reads MIISAASDYR…SGDSLVQELG (380 aa). Position 24 (Y24) interacts with substrate. The FMN site is built by S106 and Q127. Y129 contributes to the substrate binding site. T155 serves as a coordination point for FMN. R164 serves as a coordination point for substrate. K251 is a binding site for FMN. H275 serves as the catalytic Proton acceptor. R278 lines the substrate pocket. 306–330 serves as a coordination point for FMN; that stretch reads DSGIRNGLDVVRMIALGADTVLLGR.

It belongs to the FMN-dependent alpha-hydroxy acid dehydrogenase family. Requires FMN as cofactor.

It localises to the cell inner membrane. The catalysed reaction is (S)-lactate + A = pyruvate + AH2. Its function is as follows. Catalyzes the conversion of L-lactate to pyruvate. Is coupled to the respiratory chain. This is L-lactate dehydrogenase from Salmonella arizonae (strain ATCC BAA-731 / CDC346-86 / RSK2980).